A 109-amino-acid polypeptide reads, in one-letter code: MFGKGGLGGLMKQAQQMQEKMQKMQEEIAQLEVTGESGAGLVKITINGAHNCRRIDIDPSLMEDDKEMLEDLIAAAFNDAVRRAEELQKEKMASVTAGMPLPPGMKFPF.

This sequence belongs to the YbaB/EbfC family. As to quaternary structure, homodimer.

The protein resides in the cytoplasm. Its subcellular location is the nucleoid. Its function is as follows. Binds to DNA and alters its conformation. May be involved in regulation of gene expression, nucleoid organization and DNA protection. The protein is Nucleoid-associated protein HI_0442 of Haemophilus influenzae (strain ATCC 51907 / DSM 11121 / KW20 / Rd).